The chain runs to 482 residues: MPDYDNYTTPLSSRYASKEMSATFSLRNRFSTWRKLWLNLAIAEKELGLTVVTDEAIEQMRKHVEITDDEIAKASAQEAIVRHDVMAHVHTFGETCPAAAGIIHLGATSCFVTDNADLIFIRDAYDIIIPKLVNVINRLAKFAMEYKDLPVLGWTHFQPAQLTTLGKRATLWIQELLWDLRNFERARNDIGLRGVKGTTGTQASFLALFHGNHDKVEALDERVTELLGFDKVYPVTGQTYSRKIDIDVLAPLSSFAATAHKMATDIRLLANLKEVEEPFEKSQIGSSAMAYKRNPMRCERVCSLARHLGSLFSDAVQTASVQWFERTLDDSAIRRISLPSAFLTADILLSTLLNISSGLVVYPKVIERRIKGELPFMATENIIMAMVEKNASRQEVHERIRVLSHQAAAVVKEEGGENDLIERVKRDEFFKPIWEELDSLLEPSTFVGRAPQQVEKFVQKDVNNALQPFQKYLNDEQVKLNV.

Substrate-binding positions include 14 to 15 (RY), 82 to 84 (RHD), and 108 to 109 (TS). Catalysis depends on histidine 156, which acts as the Proton donor/acceptor. Lysine 196 participates in a covalent cross-link: Glycyl lysine isopeptide (Lys-Gly) (interchain with G-Cter in ubiquitin). A substrate-binding site is contributed by glutamine 238. Catalysis depends on serine 286, which acts as the Proton donor/acceptor. Residues arginine 300, arginine 326, serine 331, and arginine 335 each coordinate substrate.

It belongs to the lyase 1 family. Adenylosuccinate lyase subfamily. As to quaternary structure, homotetramer. Residues from neighboring subunits contribute catalytic and substrate-binding residues to each active site.

It carries out the reaction N(6)-(1,2-dicarboxyethyl)-AMP = fumarate + AMP. The enzyme catalyses (2S)-2-[5-amino-1-(5-phospho-beta-D-ribosyl)imidazole-4-carboxamido]succinate = 5-amino-1-(5-phospho-beta-D-ribosyl)imidazole-4-carboxamide + fumarate. The protein operates within purine metabolism; AMP biosynthesis via de novo pathway; AMP from IMP: step 2/2. Its pathway is purine metabolism; IMP biosynthesis via de novo pathway; 5-amino-1-(5-phospho-D-ribosyl)imidazole-4-carboxamide from 5-amino-1-(5-phospho-D-ribosyl)imidazole-4-carboxylate: step 2/2. This is Adenylosuccinate lyase (ADE13) from Saccharomyces cerevisiae (strain ATCC 204508 / S288c) (Baker's yeast).